Reading from the N-terminus, the 197-residue chain is Fe/S biogenesis protein NfuA (197 aa).

Residues C155 and C158 each coordinate [4Fe-4S] cluster.

This sequence belongs to the NfuA family. As to quaternary structure, homodimer. Requires [4Fe-4S] cluster as cofactor.

Its function is as follows. Involved in iron-sulfur cluster biogenesis. Binds a 4Fe-4S cluster, can transfer this cluster to apoproteins, and thereby intervenes in the maturation of Fe/S proteins. Could also act as a scaffold/chaperone for damaged Fe/S proteins. The polypeptide is Fe/S biogenesis protein NfuA (Pseudomonas savastanoi pv. phaseolicola (strain 1448A / Race 6) (Pseudomonas syringae pv. phaseolicola (strain 1448A / Race 6))).